A 1402-amino-acid polypeptide reads, in one-letter code: DNA-directed RNA polymerase subunit beta' (1402 aa).

4 residues coordinate Zn(2+): C70, C72, C85, and C88. The Mg(2+) site is built by D460, D462, and D464. Positions 812, 886, 893, and 896 each coordinate Zn(2+). Residues 1373–1402 (DRFLNGSASSNEKSRSAGVLEATDEESAGD) form a disordered region.

This sequence belongs to the RNA polymerase beta' chain family. As to quaternary structure, the RNAP catalytic core consists of 2 alpha, 1 beta, 1 beta' and 1 omega subunit. When a sigma factor is associated with the core the holoenzyme is formed, which can initiate transcription. Requires Mg(2+) as cofactor. The cofactor is Zn(2+).

It carries out the reaction RNA(n) + a ribonucleoside 5'-triphosphate = RNA(n+1) + diphosphate. In terms of biological role, DNA-dependent RNA polymerase catalyzes the transcription of DNA into RNA using the four ribonucleoside triphosphates as substrates. This Dichelobacter nodosus (strain VCS1703A) protein is DNA-directed RNA polymerase subunit beta'.